The sequence spans 232 residues: uncharacterized protein (232 aa).

Belongs to the mimivirus R73/L269/L862 family.

This is an uncharacterized protein from Acanthamoeba polyphaga mimivirus (APMV).